A 332-amino-acid polypeptide reads, in one-letter code: L-lactate dehydrogenase A chain (332 aa).

Ala-2 carries the N-acetylalanine modification. Lys-5 is modified (N6-acetyllysine; alternate). An N6-succinyllysine; alternate modification is found at Lys-5. Residue Tyr-10 is modified to Phosphotyrosine. An N6-acetyllysine modification is found at Lys-14. Residue Thr-18 is modified to Phosphothreonine. 29–57 (GAVGMACAISILMKDLADELALVDVIEDK) provides a ligand contact to NAD(+). The residue at position 57 (Lys-57) is an N6-acetyllysine; alternate. Lys-57 participates in a covalent cross-link: Glycyl lysine isopeptide (Lys-Gly) (interchain with G-Cter in SUMO2); alternate. An N6-acetyllysine modification is found at Lys-81. Position 99 (Arg-99) interacts with NAD(+). A substrate-binding site is contributed by Arg-106. At Lys-118 the chain carries N6-acetyllysine; alternate. An N6-succinyllysine; alternate modification is found at Lys-118. At Lys-126 the chain carries N6-acetyllysine. Asn-138 is a binding site for NAD(+). Substrate is bound by residues Asn-138 and Arg-169. His-193 functions as the Proton acceptor in the catalytic mechanism. N6-acetyllysine is present on residues Lys-224 and Lys-232. Tyr-239 carries the post-translational modification Phosphotyrosine. At Lys-243 the chain carries N6-acetyllysine. Thr-248 serves as a coordination point for substrate. Thr-309 bears the Phosphothreonine mark. Residue Ser-310 is modified to Phosphoserine. An N6-acetyllysine; alternate modification is found at Lys-318. Lys-318 is subject to N6-succinyllysine; alternate. Thr-322 carries the phosphothreonine modification.

The protein belongs to the LDH/MDH superfamily. LDH family. In terms of assembly, homotetramer. Interacts with PTEN upstream reading frame protein MP31. Interacts with folliculin FLCN; the interaction is direct and inhibits enzymatic activity. ISGylated. Predominantly expressed in anaerobic tissues such as skeletal muscle and liver.

It localises to the cytoplasm. The catalysed reaction is (S)-lactate + NAD(+) = pyruvate + NADH + H(+). It functions in the pathway fermentation; pyruvate fermentation to lactate; (S)-lactate from pyruvate: step 1/1. Its activity is regulated as follows. Fermentation of pyruvate to lactate is inhibited when bound to folliculin FLCN, perhaps partly by FLCN preventing binding of cofactor NADH. In terms of biological role, interconverts simultaneously and stereospecifically pyruvate and lactate with concomitant interconversion of NADH and NAD(+). The protein is L-lactate dehydrogenase A chain of Homo sapiens (Human).